Consider the following 269-residue polypeptide: Small ribosomal subunit protein uS2 (269 aa).

The interval 228-269 (ARAERQAAAAKDAAGDTGKSEADAEAVKAEAAAEEKAETTEA) is disordered. Residues 233 to 244 (QAAAAKDAAGDT) are compositionally biased toward low complexity. Residues 245–269 (GKSEADAEAVKAEAAAEEKAETTEA) are compositionally biased toward basic and acidic residues.

Belongs to the universal ribosomal protein uS2 family.

This Corynebacterium urealyticum (strain ATCC 43042 / DSM 7109) protein is Small ribosomal subunit protein uS2.